Here is a 256-residue protein sequence, read N- to C-terminus: MEVRKINTHNREKKLDDIVYDDFISTLRQIKEGNHQLREEFISEYKPFILKVTSNATGKYIDTRNSDEFSIALSAFNEAIDKFDIEKGYNFFLFSEQVIRRRLIDYSRSNKDDKEYPFSFFDDEYFYNNEKLLSKSYIGFEDIEAREDIEELKKKLQEFGITFLDLVLNVPKHRDSRQLCIRLAKMLAEDEQMYNALMKNKNIPRNELKKKAKVHGRTIGNNRKYIIALCLIFRSNLNLSKRYLEYYTMDGESDLI.

The Polymerase core binding motif lies at 67 to 80 (DEFSIALSAFNEAI). Positions 205–224 (RNELKKKAKVHGRTIGNNRK) form a DNA-binding region, H-T-H motif.

This sequence belongs to the sigma-70 factor family. SigI subfamily. As to quaternary structure, interacts with RsgI1.

The protein resides in the cytoplasm. Negatively regulated by the anti-sigma-I factor RsgI1. Binding of the polysaccharide substrate to RsgI1 may lead to the release and activation of SigI1. Its function is as follows. Sigma factors are initiation factors that promote the attachment of RNA polymerase to specific initiation sites and are then released. This sigma factor is involved in regulation of cellulosomal genes via an external polysaccharide-sensing mechanism. SigI1 promotes transcription from sigI1 and celS promoters. The chain is RNA polymerase sigma factor SigI1 from Acetivibrio thermocellus (strain ATCC 27405 / DSM 1237 / JCM 9322 / NBRC 103400 / NCIMB 10682 / NRRL B-4536 / VPI 7372) (Clostridium thermocellum).